The primary structure comprises 321 residues: uncharacterized protein (321 aa).

At 1 to 5 (MKQQA) the chain is on the cytoplasmic side. The chain crosses the membrane as a helical span at residues 6-26 (GIGILLALTTAICWGALPIAM). In terms of domain architecture, EamA 1 spans 17-144 (ICWGALPIAM…LLSGLVMFFN (128 aa)). Residues 27-35 (KQVLEVMEP) lie on the Periplasmic side of the membrane. Residues 36–56 (PTIVFYRFLMASIGLGAILAV) traverse the membrane as a helical segment. Residues 57 to 70 (KKRLPPLRVFRKPR) lie on the Cytoplasmic side of the membrane. The helical transmembrane segment at 71–91 (WLILLAVATAGLFGNFILFSS) threads the bilayer. Over 92 to 99 (SLQYLSPT) the chain is Periplasmic. Residues 100–120 (ASQVIGQLSPVGMMVASVFIL) form a helical membrane-spanning segment. Residues 121–130 (KEKMRSTQVV) are Cytoplasmic-facing. The helical transmembrane segment at 131–151 (GALMLLSGLVMFFNTSLVEIF) threads the bilayer. The Periplasmic segment spans residues 152–156 (TKLTD). A helical membrane pass occupies residues 157–177 (YTWGVIFGVGAATVWVSYGVA). One can recognise an EamA 2 domain in the interval 169 to 292 (TVWVSYGVAQ…GYLGAFVVVA (124 aa)). The Cytoplasmic segment spans residues 178-190 (QKVLLRRLASPQI). A helical membrane pass occupies residues 191–211 (LFLLYTLCTIALFPLAKPGVI). The Periplasmic portion of the chain corresponds to 212–216 (AQLSH). A helical membrane pass occupies residues 217–237 (WQLACLIFCGLNTLVGYGALA). Residues 238-249 (EAMARWQAAQVS) are Cytoplasmic-facing. A helical membrane pass occupies residues 250 to 270 (AIITLTPLFTLFFSDLLSLAW). The Periplasmic segment spans residues 271–278 (PDFFARPM). The helical transmembrane segment at 279 to 299 (LNLLGYLGAFVVVAGAMYSAI) threads the bilayer. Over 300 to 321 (GHRIWGGLRKHTTVVSQPRAGE) the chain is Cytoplasmic.

This sequence belongs to the EamA transporter family.

It is found in the cell inner membrane. This is an uncharacterized protein from Escherichia coli O157:H7.